The primary structure comprises 86 residues: MAHKKAGGSTRNGRDSESKRLGVKRFGGQNVLAGNILVRQRGTHFHAGENVGLGKDHTLFAKADGQVVFERKGPRNRRYVSVRTVQ.

The disordered stretch occupies residues 1-23; the sequence is MAHKKAGGSTRNGRDSESKRLGV.

The protein belongs to the bacterial ribosomal protein bL27 family.

The chain is Large ribosomal subunit protein bL27 from Alkalilimnicola ehrlichii (strain ATCC BAA-1101 / DSM 17681 / MLHE-1).